Consider the following 440-residue polypeptide: 3-phosphoshikimate 1-carboxyvinyltransferase (440 aa).

3-phosphoshikimate is bound by residues Lys-28, Ser-29, and Arg-33. Residue Lys-28 coordinates phosphoenolpyruvate. Gly-98 and Arg-126 together coordinate phosphoenolpyruvate. 4 residues coordinate 3-phosphoshikimate: Ser-171, Gln-173, Asp-318, and Lys-345. Gln-173 contributes to the phosphoenolpyruvate binding site. Asp-318 (proton acceptor) is an active-site residue. Positions 349 and 391 each coordinate phosphoenolpyruvate.

Belongs to the EPSP synthase family. As to quaternary structure, monomer.

It is found in the cytoplasm. The enzyme catalyses 3-phosphoshikimate + phosphoenolpyruvate = 5-O-(1-carboxyvinyl)-3-phosphoshikimate + phosphate. It functions in the pathway metabolic intermediate biosynthesis; chorismate biosynthesis; chorismate from D-erythrose 4-phosphate and phosphoenolpyruvate: step 6/7. Catalyzes the transfer of the enolpyruvyl moiety of phosphoenolpyruvate (PEP) to the 5-hydroxyl of shikimate-3-phosphate (S3P) to produce enolpyruvyl shikimate-3-phosphate and inorganic phosphate. The protein is 3-phosphoshikimate 1-carboxyvinyltransferase of Anaeromyxobacter dehalogenans (strain 2CP-C).